An 89-amino-acid polypeptide reads, in one-letter code: Three-finger toxin 3 (89 aa).

A signal peptide spans 1–16 (MKTLLLILGVVAFVYL). Intrachain disulfides connect Cys-24/Cys-47, Cys-40/Cys-66, Cys-70/Cys-81, and Cys-82/Cys-87.

It belongs to the three-finger toxin family. Ancestral subfamily. As to expression, expressed by the venom gland.

It is found in the secreted. The chain is Three-finger toxin 3 from Sistrurus catenatus edwardsii (Desert massasauga).